A 112-amino-acid chain; its full sequence is UPF0122 protein CPE1714 (112 aa).

Belongs to the UPF0122 family.

Its function is as follows. Might take part in the signal recognition particle (SRP) pathway. This is inferred from the conservation of its genetic proximity to ftsY/ffh. May be a regulatory protein. The polypeptide is UPF0122 protein CPE1714 (Clostridium perfringens (strain 13 / Type A)).